The following is a 620-amino-acid chain: PAN2-PAN3 deadenylation complex subunit PAN3 (620 aa).

The C3H1-type zinc-finger motif lies at 7–36; it reads SAKGTLCKNILIYGYCKYENKGCAFSHRRN. Disordered regions lie at residues 39–73 and 95–168; these read ANSG…QPST and VFVP…QPGP. Composition is skewed to polar residues over residues 63–73 and 101–126; these read NVNTPSFQPST and TPAS…TVSN. Residues 226 to 482 are pseudokinase domain; the sequence is QSYPGGPEIV…LESYIRKHLA (257 aa). ATP-binding positions include arginine 274, 323–330, and 380–381; these read DYYPNAST and SK. The stretch at 483–521 forms a coiled coil; sequence IRLLDVVDMLEDSNDYLESQLSTELENARLVRLMTKINF. The interval 522–620 is knob domain; sequence IVDRPEWDNE…SVFRTITRGK (99 aa).

It belongs to the protein kinase superfamily. PAN3 family. In terms of assembly, homodimer. Forms a heterotrimer with a catalytic subunit PAN2 to form the poly(A)-nuclease (PAN) deadenylation complex. Interacts (via PAM-2 motif) with poly(A)-binding protein PAB1 (via PABC domain), conferring substrate specificity of the enzyme complex.

Its subcellular location is the cytoplasm. In terms of biological role, regulatory subunit of the poly(A)-nuclease (PAN) deadenylation complex, one of two cytoplasmic mRNA deadenylases involved in mRNA turnover. PAN specifically shortens poly(A) tails of RNA and the activity is stimulated by poly(A)-binding protein PAB1. PAN deadenylation is followed by rapid degradation of the shortened mRNA tails by the CCR4-NOT complex. Deadenylated mRNAs are then degraded by two alternative mechanisms, namely exosome-mediated 3'-5' exonucleolytic degradation, or deadenylation-dependent mRNA decaping and subsequent 5'-3' exonucleolytic degradation by XRN1. May also be involved in post-transcriptional maturation of mRNA poly(A) tails. PAN3 acts as a positive regulator for PAN activity, recruiting the catalytic subunit PAN2 to mRNA via its interaction with RNA and with PAB1. This is PAN2-PAN3 deadenylation complex subunit PAN3 from Meyerozyma guilliermondii (strain ATCC 6260 / CBS 566 / DSM 6381 / JCM 1539 / NBRC 10279 / NRRL Y-324) (Yeast).